The sequence spans 254 residues: Aspartate/glutamate leucyltransferase (254 aa).

It belongs to the R-transferase family. Bpt subfamily.

The protein resides in the cytoplasm. The catalysed reaction is N-terminal L-glutamyl-[protein] + L-leucyl-tRNA(Leu) = N-terminal L-leucyl-L-glutamyl-[protein] + tRNA(Leu) + H(+). The enzyme catalyses N-terminal L-aspartyl-[protein] + L-leucyl-tRNA(Leu) = N-terminal L-leucyl-L-aspartyl-[protein] + tRNA(Leu) + H(+). Functions in the N-end rule pathway of protein degradation where it conjugates Leu from its aminoacyl-tRNA to the N-termini of proteins containing an N-terminal aspartate or glutamate. The protein is Aspartate/glutamate leucyltransferase of Xylella fastidiosa (strain M12).